The primary structure comprises 145 residues: Mite group 2 allergen Eur m 2 (145 aa).

Residues 1-16 (MYKILCLSLLVAAVAA) form the signal peptide. 3 disulfide bridges follow: cysteine 24–cysteine 135, cysteine 37–cysteine 43, and cysteine 89–cysteine 94.

The protein belongs to the NPC2 family.

Its subcellular location is the secreted. The sequence is that of Mite group 2 allergen Eur m 2 (EURM2) from Euroglyphus maynei (Mayne's house dust mite).